Here is a 292-residue protein sequence, read N- to C-terminus: MRISVKAPAKINLTLDVLAKRPDGYHEVEMVMTTVDLADRVDMTLREDGEITLDCSASFVPDDIRNHAYKAATLMKAKFQVRQGVHLYIDKQIPVAAGLAGGSSDAAATLRGLNQLWNLGLTRDELAKIGAEIGSDVPFCVYGGTALATGRGEQIAHLGAPAPCWVILAKPPIGVSTPDVYGNLRVAQIDNHPDTKQMLQAIATQDFSLMCQSLGNVLENVTLSLHPQVRQIKDLMIASGADGVLMSGSGPTVFALVQKEAKVHRIYNALRGFVKDVFVVRMLGAQEGEILA.

The active site involves K10. An ATP-binding site is contributed by 94–104 (PVAAGLAGGSS). The active site involves D136.

Belongs to the GHMP kinase family. IspE subfamily.

The enzyme catalyses 4-CDP-2-C-methyl-D-erythritol + ATP = 4-CDP-2-C-methyl-D-erythritol 2-phosphate + ADP + H(+). The protein operates within isoprenoid biosynthesis; isopentenyl diphosphate biosynthesis via DXP pathway; isopentenyl diphosphate from 1-deoxy-D-xylulose 5-phosphate: step 3/6. Its function is as follows. Catalyzes the phosphorylation of the position 2 hydroxy group of 4-diphosphocytidyl-2C-methyl-D-erythritol. In Brevibacillus brevis (strain 47 / JCM 6285 / NBRC 100599), this protein is 4-diphosphocytidyl-2-C-methyl-D-erythritol kinase.